We begin with the raw amino-acid sequence, 239 residues long: Tungstate uptake system permease protein TupB (239 aa).

The 197-residue stretch at Ile-37–Thr-233 folds into the ABC transmembrane type-1 domain. Transmembrane regions (helical) follow at residues Ser-45–Phe-65, Ile-76–Ile-96, Leu-114–Ile-134, Ile-168–Val-188, and Phe-212–Ile-232.

It belongs to the binding-protein-dependent transport system permease family. The complex is composed of two ATP-binding proteins (TupC), two transmembrane proteins (TupB) and a solute-binding protein (TupA).

It localises to the cell inner membrane. In terms of biological role, part of an ABC transporter complex involved in ultra-high affinity tungstate uptake. Probably responsible for the translocation of the substrate across the membrane. This is Tungstate uptake system permease protein TupB from Campylobacter jejuni subsp. jejuni serotype O:2 (strain ATCC 700819 / NCTC 11168).